Here is a 358-residue protein sequence, read N- to C-terminus: Probable branched-chain-amino-acid aminotransferase (358 aa).

Lysine 196 carries the N6-(pyridoxal phosphate)lysine modification.

It belongs to the class-IV pyridoxal-phosphate-dependent aminotransferase family. The cofactor is pyridoxal 5'-phosphate.

The catalysed reaction is L-leucine + 2-oxoglutarate = 4-methyl-2-oxopentanoate + L-glutamate. The enzyme catalyses L-isoleucine + 2-oxoglutarate = (S)-3-methyl-2-oxopentanoate + L-glutamate. It catalyses the reaction L-valine + 2-oxoglutarate = 3-methyl-2-oxobutanoate + L-glutamate. Its pathway is amino-acid biosynthesis; L-isoleucine biosynthesis; L-isoleucine from 2-oxobutanoate: step 4/4. It functions in the pathway amino-acid biosynthesis; L-leucine biosynthesis; L-leucine from 3-methyl-2-oxobutanoate: step 4/4. The protein operates within amino-acid biosynthesis; L-valine biosynthesis; L-valine from pyruvate: step 4/4. Acts on leucine, isoleucine and valine. In Staphylococcus epidermidis (strain ATCC 35984 / DSM 28319 / BCRC 17069 / CCUG 31568 / BM 3577 / RP62A), this protein is Probable branched-chain-amino-acid aminotransferase (ilvE).